Reading from the N-terminus, the 341-residue chain is MVLQAIGKHALGVVLLLFVVFLWLISSFLTSSLLDDDNFFSPFLITYINTGTFVFYLIPWYFSEKKTRKHRLMSELSMYESVHDSSFNLGTRPNSPLGFRQTAYLSLGFCIIWFAANYFSNSSLGFTNVASFTIISSMSGFFTLGLGTIVNVERFTLSKLLALMASVGGVIIVVTQDAKQADLNDSPPSRPALGNAYALLAALLYGCYSVMVKFHITEESCVSTRLFFGLVGLFDLILLWPFLIILHLYGVERFSLPSTTAGLIVLIINASITFVSDYLWVIAMLMTSPLLVTVGMSLSIPLALFFDILLKGHYLNFSLILGSLLVFAGFIVVNYNQQNII.

10 helical membrane-spanning segments follow: residues 10-30 (ALGVVLLLFVVFLWLISSFLT), 42-62 (PFLITYINTGTFVFYLIPWYF), 107-127 (LGFCIIWFAANYFSNSSLGFT), 129-149 (VASFTIISSMSGFFTLGLGTI), 155-175 (FTLSKLLALMASVGGVIIVVT), 192-212 (ALGNAYALLAALLYGCYSVMV), 226-246 (LFFGLVGLFDLILLWPFLIIL), 263-283 (LIVLIINASITFVSDYLWVIA), 290-310 (LLVTVGMSLSIPLALFFDILL), and 313-333 (HYLNFSLILGSLLVFAGFIVV).

It belongs to the TPT transporter family.

It localises to the vacuole membrane. It is found in the golgi apparatus membrane. This is an uncharacterized protein from Schizosaccharomyces pombe (strain 972 / ATCC 24843) (Fission yeast).